The following is a 241-amino-acid chain: MKILLIGYGAMNQRVARLAEEKGHEIIGVIEPQKNETTPYTHYDHITDAQNEADVAIDFSNPNLLFPLLEEEFQLPLVIATTGEKEKLIEKLNELSHNMPVFFSANMSYGVHALTKILEAAIPLLQDYDIELTEAHHNKKVDAPSGTLVKLYDVIKDLRQNITPVYDRHELTEQRTKDEVGIHSIRGGTIVGEHDVLFAGTDETITLSHKAQSKDIFANGAITAAEKLINQSNGYYTFDNL.

Residues 80–82 and 104–107 each bind NAD(+); these read ATT and SANM. Histidine 136 serves as the catalytic Proton donor/acceptor. Histidine 137 contacts (S)-2,3,4,5-tetrahydrodipicolinate. Catalysis depends on lysine 140, which acts as the Proton donor. Residue 146 to 147 participates in (S)-2,3,4,5-tetrahydrodipicolinate binding; sequence GT.

This sequence belongs to the DapB family.

It localises to the cytoplasm. The enzyme catalyses (S)-2,3,4,5-tetrahydrodipicolinate + NAD(+) + H2O = (2S,4S)-4-hydroxy-2,3,4,5-tetrahydrodipicolinate + NADH + H(+). It carries out the reaction (S)-2,3,4,5-tetrahydrodipicolinate + NADP(+) + H2O = (2S,4S)-4-hydroxy-2,3,4,5-tetrahydrodipicolinate + NADPH + H(+). It functions in the pathway amino-acid biosynthesis; L-lysine biosynthesis via DAP pathway; (S)-tetrahydrodipicolinate from L-aspartate: step 4/4. Catalyzes the conversion of 4-hydroxy-tetrahydrodipicolinate (HTPA) to tetrahydrodipicolinate. This is 4-hydroxy-tetrahydrodipicolinate reductase from Staphylococcus haemolyticus (strain JCSC1435).